A 128-amino-acid chain; its full sequence is MKKMLVEFRDFALKGNVLDLAVAVVIGAAFGKIVSSLVDNIIMPLVGVLLGGLDFTDLSFKVGKSVIQYGAFIQSIVDFVIIAFAIFIFVKVLTSFIKKKEQTVEETPVPPTEEYLKEIRDLLKEQQK.

The next 2 helical transmembrane spans lie at 11 to 31 and 70 to 90; these read FALKGNVLDLAVAVVIGAAFG and GAFIQSIVDFVIIAFAIFIFV.

Belongs to the MscL family. In terms of assembly, homopentamer.

It localises to the cell membrane. Channel that opens in response to stretch forces in the membrane lipid bilayer. May participate in the regulation of osmotic pressure changes within the cell. This Listeria monocytogenes serotype 4b (strain CLIP80459) protein is Large-conductance mechanosensitive channel.